Reading from the N-terminus, the 239-residue chain is MNKINLEDKIILAIDGLNIQEAKLFLERCPNIKWVKVGLELFTREGPNVIKFLKDLNKKIFLDLKFHDIPNTMEAACYEVSKLGVDIISVHASSGYKALTSSKNASLDGANLASVNPPNIVGITVLTSFSSEEFRNDLDRKNSIEENVVRLAKLCFDAGLDGCVCSPWEAKRLRSIYKNNFELITPGIRTKTQNKDDQNRIMTPYEALKNGASRLVIGRAISKAKDPNKVFLDICNSIY.

Residues Asp-15, Lys-36, Asp-63–Thr-72, Thr-127, Arg-189, Gln-198, Gly-218, and Arg-219 each bind substrate. Lys-65 serves as the catalytic Proton donor.

It belongs to the OMP decarboxylase family. Type 1 subfamily. In terms of assembly, homodimer.

The catalysed reaction is orotidine 5'-phosphate + H(+) = UMP + CO2. Its pathway is pyrimidine metabolism; UMP biosynthesis via de novo pathway; UMP from orotate: step 2/2. Catalyzes the decarboxylation of orotidine 5'-monophosphate (OMP) to uridine 5'-monophosphate (UMP). The chain is Orotidine 5'-phosphate decarboxylase from Prochlorococcus marinus (strain MIT 9515).